A 526-amino-acid polypeptide reads, in one-letter code: Phosphoenolpyruvate carboxylase (526 aa).

The protein belongs to the PEPCase type 2 family. In terms of assembly, homotetramer. It depends on Mg(2+) as a cofactor.

The enzyme catalyses oxaloacetate + phosphate = phosphoenolpyruvate + hydrogencarbonate. Catalyzes the irreversible beta-carboxylation of phosphoenolpyruvate (PEP) to form oxaloacetate (OAA), a four-carbon dicarboxylic acid source for the tricarboxylic acid cycle. The polypeptide is Phosphoenolpyruvate carboxylase (Methanosarcina acetivorans (strain ATCC 35395 / DSM 2834 / JCM 12185 / C2A)).